The primary structure comprises 410 residues: Interstrand DNA cross-link repair glycosylase (410 aa).

A QXD; important for activity motif is present at residues 45–47; it reads QID.

It belongs to the DNA glycosylase AlkZ-like family.

In terms of biological role, DNA glycosylase involved in the repair of interstrand DNA cross-links (ICLs), which are highly toxic DNA lesions that covalently tether the opposing strands of DNA, thereby inhibiting essential cellular processes such as DNA replication and transcription. Acts by unhooking both sides of the ICLs, forming abasic (AP) sites on both strands. Unhooks ICLs derived from various cross-linking agents, including azinomycin B (AZB) and mechlorethamine, also known as nitrogen mustard (NM), protecting cells from the toxicity of these cross-linking agents. In vitro, also acts on monoadducts and can catalyze the excision of N7-methylguanine (7mGua) from an oligonucleotide containing N7-methyldeoxyguanosine (d7mG). Shows no unhooking activity toward FaPy-ICLs. This chain is Interstrand DNA cross-link repair glycosylase (ycaQ), found in Escherichia coli (strain K12).